The primary structure comprises 240 residues: MTNGTIHNKDGFLNRIAERLGRNRRSAGVTVPDYIHQPQHRVYQGYTQDELVGVLKDHCRKIHTELIETDVIGLHDALYEQAARFGGGPVMIPKDDRFKEYGLSGLLTDKWPNEGTKVWEWDAAAGDENIQRAEQANIGVTFSEITLAESGTVVLFSSKDKGRSVSLLPTTYIAIVPKSTIVPRMTQASAIIKQKIADGDVIPSCINYVTGPSNSADIEMDLVVGVHGPVKAAYIVVEDR.

Belongs to the LutC/YkgG family.

Functionally, is involved in L-lactate degradation and allows cells to grow with lactate as the sole carbon source. The sequence is that of Lactate utilization protein C from Bacillus licheniformis (strain ATCC 14580 / DSM 13 / JCM 2505 / CCUG 7422 / NBRC 12200 / NCIMB 9375 / NCTC 10341 / NRRL NRS-1264 / Gibson 46).